Reading from the N-terminus, the 1770-residue chain is Transposon Ty2-DR3 Gag-Pol polyprotein (1770 aa).

6 stretches are compositionally biased toward polar residues: residues 1 to 11 (MESQQLHQNPH), 19 to 39 (ASVT…SASN), 49 to 60 (KVNSQQETTPGT), 366 to 390 (VSRT…NSSK), 399 to 408 (IATSSKFSRV), and 415 to 435 (ESTV…GQQQ). Disordered regions lie at residues 1–89 (MESQ…QQHG) and 355–449 (SQYK…SNDE). Residues 295–397 (ENNINVSDRL…SSKPRAAKAH (103 aa)) form an RNA-binding region. Asp-457 (for protease activity; shared with dimeric partner) is an active-site residue. Residues 579-636 (NVNKSKSVNKYPYPLIHRMLGHANFRSIQKSLKKNAVTYLKESDIEWSNASTYQCPDC) form an integrase-type zinc finger-like region. The region spanning 656–831 (ESYEPFQYLH…AGLDITTILP (176 aa)) is the Integrase catalytic domain. Asp-667 and Asp-732 together coordinate Mg(2+). 2 disordered regions span residues 1005–1038 (GGTI…MIDL) and 1057–1205 (GGTE…TEIE). Composition is skewed to polar residues over residues 1009-1024 (ESDT…FTAR) and 1065-1082 (QRNS…STPS). The short motif at 1193 to 1227 (KKRSLEDNETEIEVSRDTWNNKNMRSLEPPRSKKR) is the Bipartite nuclear localization signal element. A Reverse transcriptase Ty1/copia-type domain is found at 1353–1491 (NDYYITQLDI…DILGLEIKYQ (139 aa)). Positions 1361, 1442, 1443, 1625, 1667, and 1700 each coordinate Mg(2+). Positions 1625-1767 (DASYGNQPYY…IKTFKLLTNK (143 aa)) constitute an RNase H Ty1/copia-type domain.

In terms of assembly, the capsid protein forms a homotrimer, from which the VLPs are assembled. The protease is a homodimer, whose active site consists of two apposed aspartic acid residues. Initially, virus-like particles (VLPs) are composed of the structural unprocessed proteins Gag and Gag-Pol, and also contain the host initiator methionine tRNA (tRNA(i)-Met) which serves as a primer for minus-strand DNA synthesis, and a dimer of genomic Ty RNA. Processing of the polyproteins occurs within the particle and proceeds by an ordered pathway, called maturation. First, the protease (PR) is released by autocatalytic cleavage of the Gag-Pol polyprotein, and this cleavage is a prerequisite for subsequent processing at the remaining sites to release the mature structural and catalytic proteins. Maturation takes place prior to the RT reaction and is required to produce transposition-competent VLPs.

It localises to the cytoplasm. The protein resides in the nucleus. The catalysed reaction is DNA(n) + a 2'-deoxyribonucleoside 5'-triphosphate = DNA(n+1) + diphosphate. It carries out the reaction Endonucleolytic cleavage to 5'-phosphomonoester.. In terms of biological role, capsid protein (CA) is the structural component of the virus-like particle (VLP), forming the shell that encapsulates the retrotransposons dimeric RNA genome. The particles are assembled from trimer-clustered units and there are holes in the capsid shells that allow for the diffusion of macromolecules. CA also has nucleocapsid-like chaperone activity, promoting primer tRNA(i)-Met annealing to the multipartite primer-binding site (PBS), dimerization of Ty2 RNA and initiation of reverse transcription. Functionally, the aspartyl protease (PR) mediates the proteolytic cleavages of the Gag and Gag-Pol polyproteins after assembly of the VLP. Reverse transcriptase/ribonuclease H (RT) is a multifunctional enzyme that catalyzes the conversion of the retro-elements RNA genome into dsDNA within the VLP. The enzyme displays a DNA polymerase activity that can copy either DNA or RNA templates, and a ribonuclease H (RNase H) activity that cleaves the RNA strand of RNA-DNA heteroduplexes during plus-strand synthesis and hydrolyzes RNA primers. The conversion leads to a linear dsDNA copy of the retrotransposon that includes long terminal repeats (LTRs) at both ends. Its function is as follows. Integrase (IN) targets the VLP to the nucleus, where a subparticle preintegration complex (PIC) containing at least integrase and the newly synthesized dsDNA copy of the retrotransposon must transit the nuclear membrane. Once in the nucleus, integrase performs the integration of the dsDNA into the host genome. The polypeptide is Transposon Ty2-DR3 Gag-Pol polyprotein (TY2B-DR3) (Saccharomyces cerevisiae (strain ATCC 204508 / S288c) (Baker's yeast)).